We begin with the raw amino-acid sequence, 573 residues long: Dihydroxy-acid dehydratase (573 aa).

C62 contacts [2Fe-2S] cluster. D94 lines the Mg(2+) pocket. C135 is a [2Fe-2S] cluster binding site. D136 and K137 together coordinate Mg(2+). K137 is modified (N6-carboxylysine). C212 is a [2Fe-2S] cluster binding site. E463 is a binding site for Mg(2+). S489 serves as the catalytic Proton acceptor.

Belongs to the IlvD/Edd family. In terms of assembly, homodimer. Requires [2Fe-2S] cluster as cofactor. Mg(2+) serves as cofactor.

It catalyses the reaction (2R)-2,3-dihydroxy-3-methylbutanoate = 3-methyl-2-oxobutanoate + H2O. The catalysed reaction is (2R,3R)-2,3-dihydroxy-3-methylpentanoate = (S)-3-methyl-2-oxopentanoate + H2O. It participates in amino-acid biosynthesis; L-isoleucine biosynthesis; L-isoleucine from 2-oxobutanoate: step 3/4. Its pathway is amino-acid biosynthesis; L-valine biosynthesis; L-valine from pyruvate: step 3/4. Its function is as follows. Functions in the biosynthesis of branched-chain amino acids. Catalyzes the dehydration of (2R,3R)-2,3-dihydroxy-3-methylpentanoate (2,3-dihydroxy-3-methylvalerate) into 2-oxo-3-methylpentanoate (2-oxo-3-methylvalerate) and of (2R)-2,3-dihydroxy-3-methylbutanoate (2,3-dihydroxyisovalerate) into 2-oxo-3-methylbutanoate (2-oxoisovalerate), the penultimate precursor to L-isoleucine and L-valine, respectively. This chain is Dihydroxy-acid dehydratase, found in Renibacterium salmoninarum (strain ATCC 33209 / DSM 20767 / JCM 11484 / NBRC 15589 / NCIMB 2235).